The sequence spans 304 residues: UDP-N-acetylenolpyruvoylglucosamine reductase (304 aa).

The FAD-binding PCMH-type domain maps to 31–196 (KVGGPADYLA…ISAKFNLKPG (166 aa)). Residue Arg-175 is part of the active site. The Proton donor role is filled by Ser-225. Glu-295 is a catalytic residue.

Belongs to the MurB family. FAD is required as a cofactor.

The protein resides in the cytoplasm. The enzyme catalyses UDP-N-acetyl-alpha-D-muramate + NADP(+) = UDP-N-acetyl-3-O-(1-carboxyvinyl)-alpha-D-glucosamine + NADPH + H(+). The protein operates within cell wall biogenesis; peptidoglycan biosynthesis. Cell wall formation. This is UDP-N-acetylenolpyruvoylglucosamine reductase from Streptococcus thermophilus (strain ATCC BAA-491 / LMD-9).